We begin with the raw amino-acid sequence, 466 residues long: Collagenase 3 (466 aa).

The signal sequence occupies residues 1-13; the sequence is ATFFLLSWTHCWS. The propeptide at 14 to 98 is activation peptide; the sequence is LPLPYGDDDD…PRCGVPDVGV (85 aa). The short motif at 89–96 is the Cysteine switch element; the sequence is PRCGVPDV. C91 serves as a coordination point for Zn(2+). The N-linked (GlcNAc...) asparagine glycan is linked to N112. Position 123 (D123) interacts with Ca(2+). N-linked (GlcNAc...) asparagine glycosylation occurs at N147. D157 lines the Ca(2+) pocket. 2 residues coordinate Zn(2+): H167 and D169. Residues 171–241 form an interaction with TIMP2 region; the sequence is YPFDGPSGLL…GALMFPIYTY (71 aa). 4 residues coordinate Ca(2+): D174, G175, S177, and L179. Zn(2+) is bound at residue H182. Ca(2+) is bound by residues N189, G191, and D193. H195 contributes to the Zn(2+) binding site. Residues D197, D198, and E200 each coordinate Ca(2+). Residue H217 participates in Zn(2+) binding. E218 is an active-site residue. 3 residues coordinate Zn(2+): H221, H227, and M235. The tract at residues 258-279 is disordered; that stretch reads QSLYGPGDEDPNPKHPKTPEKC. The interaction with collagen stretch occupies residues 263–466; it reads PGDEDPNPKH…VMPTNSLLWC (204 aa). Residues 268–279 are compositionally biased toward basic and acidic residues; sequence PNPKHPKTPEKC. Hemopexin repeat units lie at residues 276–325, 326–372, 374–422, and 423–466; these read PEKC…WPEL, PNHV…GFPK, VKRL…FPGI, and GDKV…LLWC. An intrachain disulfide couples C279 to C466. Ca(2+) is bound by residues D286, I288, D330, and A332. Y361 bears the Phosphotyrosine; by PKDCC mark. Ca(2+)-binding residues include S378 and A380. N404 carries N-linked (GlcNAc...) asparagine glycosylation. Residues D427 and V429 each contribute to the Ca(2+) site.

This sequence belongs to the peptidase M10A family. It depends on Ca(2+) as a cofactor. Requires Zn(2+) as cofactor. In terms of processing, the proenzyme is activated by removal of the propeptide; this cleavage can be effected by other matrix metalloproteinases, such as MMP2, MMP3 and MMP14 and may involve several cleavage steps. Cleavage can also be autocatalytic, after partial maturation by another protease or after treatment with 4-aminophenylmercuric acetate (APMA) (in vitro). Post-translationally, N-glycosylated. Tyrosine phosphorylated by PKDCC/VLK.

Its subcellular location is the secreted. It is found in the extracellular space. The protein resides in the extracellular matrix. Plays a role in the degradation of extracellular matrix proteins including fibrillar collagen, fibronectin, TNC and ACAN. Cleaves triple helical collagens, including type I, type II and type III collagen, but has the highest activity with soluble type II collagen. Can also degrade collagen type IV, type XIV and type X. May also function by activating or degrading key regulatory proteins, such as TGFB1 and CCN2. Plays a role in wound healing, tissue remodeling, cartilage degradation, bone development, bone mineralization and ossification. Required for normal embryonic bone development and ossification. Plays a role in the healing of bone fractures via endochondral ossification. Plays a role in wound healing, probably by a mechanism that involves proteolytic activation of TGFB1 and degradation of CCN2. Plays a role in keratinocyte migration during wound healing. May play a role in cell migration and in tumor cell invasion. The sequence is that of Collagenase 3 (Mmp13) from Rattus norvegicus (Rat).